A 225-amino-acid polypeptide reads, in one-letter code: Ribosomal RNA small subunit methyltransferase G (225 aa).

Residues glycine 62, 113 to 114, and lysine 130 contribute to the S-adenosyl-L-methionine site; that span reads AE.

This sequence belongs to the methyltransferase superfamily. RNA methyltransferase RsmG family.

It is found in the cytoplasm. Functionally, specifically methylates the N7 position of a guanine in 16S rRNA. This Petrotoga mobilis (strain DSM 10674 / SJ95) protein is Ribosomal RNA small subunit methyltransferase G.